We begin with the raw amino-acid sequence, 664 residues long: ATP-dependent zinc metalloprotease FtsH (664 aa).

At Met1–Trp9 the chain is on the cytoplasmic side. A helical transmembrane segment spans residues Ile10–Leu30. At Phe31–Pro136 the chain is on the extracellular side. Residues Phe137–Ile157 form a helical membrane-spanning segment. Residues Tyr158 to Glu664 are Cytoplasmic-facing. Gly229 to Thr236 contacts ATP. His451 serves as a coordination point for Zn(2+). Residue Glu452 is part of the active site. Residues His455 and Asp529 each contribute to the Zn(2+) site. Positions Ile639 to Glu649 are enriched in basic and acidic residues. Residues Ile639–Glu664 are disordered.

In the central section; belongs to the AAA ATPase family. It in the C-terminal section; belongs to the peptidase M41 family. Homohexamer. Zn(2+) serves as cofactor.

It is found in the cell membrane. Its function is as follows. Acts as a processive, ATP-dependent zinc metallopeptidase for both cytoplasmic and membrane proteins. Plays a role in the quality control of integral membrane proteins. The chain is ATP-dependent zinc metalloprotease FtsH from Mycoplasmopsis synoviae (strain 53) (Mycoplasma synoviae).